A 142-amino-acid polypeptide reads, in one-letter code: Nucleoside diphosphate kinase (142 aa).

ATP contacts are provided by Lys-11, Phe-59, Arg-87, Thr-93, Arg-104, and Asn-114. The Pros-phosphohistidine intermediate role is filled by His-117.

Belongs to the NDK family. In terms of assembly, homotetramer. Mg(2+) serves as cofactor.

The protein resides in the cytoplasm. The catalysed reaction is a 2'-deoxyribonucleoside 5'-diphosphate + ATP = a 2'-deoxyribonucleoside 5'-triphosphate + ADP. The enzyme catalyses a ribonucleoside 5'-diphosphate + ATP = a ribonucleoside 5'-triphosphate + ADP. Major role in the synthesis of nucleoside triphosphates other than ATP. The ATP gamma phosphate is transferred to the NDP beta phosphate via a ping-pong mechanism, using a phosphorylated active-site intermediate. The protein is Nucleoside diphosphate kinase of Aeromonas hydrophila subsp. hydrophila (strain ATCC 7966 / DSM 30187 / BCRC 13018 / CCUG 14551 / JCM 1027 / KCTC 2358 / NCIMB 9240 / NCTC 8049).